Here is a 344-residue protein sequence, read N- to C-terminus: tRNA N6-adenosine threonylcarbamoyltransferase (344 aa).

Fe cation-binding residues include His119 and His123. Substrate-binding positions include 141–145 (VVSGG), Asp174, Gly187, Asp191, and Asn280. Asp310 lines the Fe cation pocket.

The protein belongs to the KAE1 / TsaD family. Fe(2+) serves as cofactor.

Its subcellular location is the cytoplasm. The catalysed reaction is L-threonylcarbamoyladenylate + adenosine(37) in tRNA = N(6)-L-threonylcarbamoyladenosine(37) in tRNA + AMP + H(+). In terms of biological role, required for the formation of a threonylcarbamoyl group on adenosine at position 37 (t(6)A37) in tRNAs that read codons beginning with adenine. Is involved in the transfer of the threonylcarbamoyl moiety of threonylcarbamoyl-AMP (TC-AMP) to the N6 group of A37, together with TsaE and TsaB. TsaD likely plays a direct catalytic role in this reaction. The chain is tRNA N6-adenosine threonylcarbamoyltransferase from Listeria welshimeri serovar 6b (strain ATCC 35897 / DSM 20650 / CCUG 15529 / CIP 8149 / NCTC 11857 / SLCC 5334 / V8).